Consider the following 60-residue polypeptide: Venom protein 4.1 (60 aa).

Positions 1-26 (MKALCAILLVLFACSVMFEHFSISTA) are cleaved as a signal peptide.

The protein belongs to the non-disulfide-bridged peptide (NDBP) superfamily. Expressed by the venom gland.

The protein resides in the secreted. The chain is Venom protein 4.1 from Lychas mucronatus (Chinese swimming scorpion).